The primary structure comprises 440 residues: MPRVKAAQAGRPGPAKRRLAEQFAAGEVLTDMSRKEWKLGLPIGQGGFGCIYLADTNSSKPVGSDAPCVVKVEPSDNGPLFTELKFYQRAAKPEQIQKWIRTHKLKYLGVPKYWGSGLHDKNGKSYRFMIMDRFGSDLQKIYEANAKRFSRKTVLQLSLRILDILEYIHEHEYVHGDIKASNLLLSHKNPDQVYLVDYGLAYRYCPDGVHKEYKEDPKRCHDGTLEFTSIDAHKGVAPSRRGDLEILGYCMIQWLSGCLPWEDNLKDPNYVRDSKIRYRDNVAALMEKCFPEKNKPGEIAKYMESVKLLEYTEKPLYQNLRDILLQGLKAIGSKDDGKLDFSAVENGSVKTRPASKKRKKEAEESAVCAVEDMECSDTQVQEAAQTRSVESQGAIHGSMSQPAAGCSSSDSSRRQQHLGLEQDMLRLDRRGSRTRKKAQK.

The Protein kinase domain maps to 37 to 317; that stretch reads WKLGLPIGQG…LLEYTEKPLY (281 aa). ATP contacts are provided by residues 43–51 and lysine 71; that span reads IGQGGFGCI. Residue lysine 71 forms a Glycyl lysine isopeptide (Lys-Gly) (interchain with G-Cter in SUMO2) linkage. Residue aspartate 177 is the Proton acceptor of the active site. The residue at position 342 (serine 342) is a Phosphoserine; by PLK3. Serine 376 carries the post-translational modification Phosphoserine. Threonine 378 carries the post-translational modification Phosphothreonine. Polar residues-rich tracts occupy residues 379–391 and 398–410; these read QVQE…SVES and SMSQ…SSSD. The interval 379–440 is disordered; it reads QVQEAAQTRS…GSRTRKKAQK (62 aa). The tract at residues 387–393 is required for interaction with the nucleosome; that stretch reads RSVESQG.

Belongs to the protein kinase superfamily. CK1 Ser/Thr protein kinase family. VRK subfamily. As to quaternary structure, interacts with HDAC1, KAT2B, SETDB1, KDM3A and KDM4A. Associates with the nucleosome through interactions with nucleosome DNA, histone H2A and histone H2B; the interaction with H2A and H2B is mediated by the nucleosome acidic patch, a cluster of negatively charged residues of H2A and H2B forming a cleft within the nucleosome core. Post-translationally, autophosphorylated at various serine and threonine residues. Autophosphorylation does not impair its ability to phosphorylate p53/TP53. Phosphorylation by PLK3 leads to induction of Golgi fragmentation during mitosis. In terms of tissue distribution, highly expressed in testis. Expressed in liver, kidney and muscle. Weakly expressed in thymus, bone marrow and spleen.

The protein localises to the nucleus. The protein resides in the cytoplasm. It localises to the cajal body. The catalysed reaction is L-seryl-[protein] + ATP = O-phospho-L-seryl-[protein] + ADP + H(+). The enzyme catalyses L-threonyl-[protein] + ATP = O-phospho-L-threonyl-[protein] + ADP + H(+). Its activity is regulated as follows. Active in presence of Mn(2+), Mg(2+) and Zn(2+), but is not functional with Ca(2+) or Cu(2+). Has a higher affinity for Mn(2+) than for Mg(2+). RAN inhibits its autophosphorylation and its ability to phosphorylate histone H3. In terms of biological role, serine/threonine kinase involved in the regulation of key cellular processes including the cell cycle, nuclear condensation, transcription regulation, and DNA damage response. Controls chromatin organization and remodeling by mediating phosphorylation of histone H3 on 'Thr-4' and histone H2AX (H2aXT4ph). It also phosphorylates KAT5 in response to DNA damage, promoting KAT5 association with chromatin and histone acetyltransferase activity. Is involved in the regulation of cell cycle progression of neural progenitors, and is required for proper cortical neuronal migration. Is involved in neurite elongation and branching in motor neurons, and has an essential role in Cajal bodies assembly, acting through COIL phosphorylation and the control of coilin degradation. Involved in Golgi disassembly during the cell cycle: following phosphorylation by PLK3 during mitosis, required to induce Golgi fragmentation. Phosphorylates BANF1: disrupts its ability to bind DNA, reduces its binding to LEM domain-containing proteins and causes its relocalization from the nucleus to the cytoplasm. Phosphorylates TP53BP1 and p53/TP53 on 'Thr-18', preventing the interaction between p53/TP53 and MDM2. Phosphorylates ATF2 which activates its transcriptional activity. Phosphorylates JUN. This chain is Serine/threonine-protein kinase VRK1, found in Mus musculus (Mouse).